A 688-amino-acid chain; its full sequence is Potassium-transporting ATPase ATP-binding subunit (688 aa).

4 helical membrane passes run 34–54 (PVMFVVYLGSGLTTLIWLAIL), 62–82 (ALFTGSVALWLWFTVLFANFA), 219–239 (VALTILLVALTIVFLLATATL), and 260–280 (VLVALLVCLIPTTIGGLLSAI). The active-site 4-aspartylphosphate intermediate is aspartate 313. ATP-binding positions include aspartate 350, glutamate 354, 383–390 (FSAQTRMS), and lysine 401. Residues aspartate 524 and aspartate 528 each contribute to the Mg(2+) site. 3 helical membrane passes run 594–614 (FAIIPAAFAATYPQLNALNVM), 622–642 (AILSAVIFNALIIVFLIPLAL), and 667–687 (GLLVPFVGIKLIDLVLAALIM).

The protein belongs to the cation transport ATPase (P-type) (TC 3.A.3) family. Type IA subfamily. In terms of assembly, the system is composed of three essential subunits: KdpA, KdpB and KdpC.

The protein localises to the cell inner membrane. The enzyme catalyses K(+)(out) + ATP + H2O = K(+)(in) + ADP + phosphate + H(+). In terms of biological role, part of the high-affinity ATP-driven potassium transport (or Kdp) system, which catalyzes the hydrolysis of ATP coupled with the electrogenic transport of potassium into the cytoplasm. This subunit is responsible for energy coupling to the transport system and for the release of the potassium ions to the cytoplasm. The polypeptide is Potassium-transporting ATPase ATP-binding subunit (Yersinia enterocolitica serotype O:8 / biotype 1B (strain NCTC 13174 / 8081)).